The primary structure comprises 804 residues: Mechanosensitive cation channel TMEM63A (804 aa).

At 1–51 (MTSSPFLDPWPSKAVFVRERLGLGERPNDSYCYNSAKNSTVLQGVTFGGIP) the chain is on the extracellular side. Asn-38 carries an N-linked (GlcNAc...) asparagine glycan. A helical membrane pass occupies residues 52 to 74 (TVLLLDVSCFLFLILVFSIIRRR). At 75 to 133 (FWDYGRIALVSEAGSEARFQRLSSSSSGQQDFENELGCCPWLTAIFRLHDDQILEWCGE) the chain is on the cytoplasmic side. Residues 134-166 (DAIHYLSFQRHIIFLLVVISFLSLCVILPVNLS) form a helical membrane-spanning segment. At 167–190 (GDLLGKDPYSFGRTTIANLQTDND) the chain is on the extracellular side. The chain crosses the membrane as a helical span at residues 191–216 (LLWLHTVFSVIYLFLTVGFMWHHTRS). Residues 217 to 415 (IRYKEESLVR…CWKNLSIQGV (199 aa)) lie on the Cytoplasmic side of the membrane. The tract at residues 218–413 (RYKEESLVRQ…DICWKNLSIQ (196 aa)) is intracellular linker IL2; confers mechanosensitivity. Residues 416 to 443 (RWWLQWLGINFSLFVVLFFLTTPSIIMS) traverse the membrane as a helical segment. Over 444 to 461 (TMDKFNVTKPIHALNNPV) the chain is Extracellular. An N-linked (GlcNAc...) asparagine glycan is attached at Asn-449. The chain crosses the membrane as a helical span at residues 462 to 489 (ISQFFPTLLLWSFSALLPSIVYYSTLLE). Residues 490–494 (SHWTR) are Cytoplasmic-facing. A helical transmembrane segment spans residues 495 to 531 (SGENRIMVSKVYIFLIFMVLILPSLGLTSLDFFFRWL). Topologically, residues 532 to 553 (FDKTSSETSIRLECVFLPDQGA) are extracellular. A helical membrane pass occupies residues 554–585 (FFVNYVIASAFIGSGMELLRLPGLILYTFRMI). Residues 554–585 (FFVNYVIASAFIGSGMELLRLPGLILYTFRMI) are gating helix. Topologically, residues 586 to 605 (MAKTAADRRNVKQNQAFEYE) are cytoplasmic. The chain crosses the membrane as a helical span at residues 606–623 (FGAMYAWMLCVFTVIMAY). The Extracellular segment spans residues 624 to 627 (SITC). The helical transmembrane segment at 628–650 (PIIVPFGLIYILLKHMVDRHNLY) threads the bilayer. Residues 651-660 (FAYLPAKLEK) are Cytoplasmic-facing. A helical transmembrane segment spans residues 661–688 (RIHFAAVNQALAAPILCLFWLFFFSFLR). The Extracellular segment spans residues 689–693 (LGLTA). A helical transmembrane segment spans residues 694-708 (PATLFTFLVVLLTIL). Over 709–804 (ACLLYTCFGC…GTAAYAYQES (96 aa)) the chain is Cytoplasmic. Position 738 is a phosphoserine (Ser-738).

It belongs to the CSC1 (TC 1.A.17) family. In terms of assembly, monomer. Post-translationally, N-Glycosylated.

The protein resides in the lysosome membrane. The protein localises to the early endosome membrane. It is found in the cell membrane. It catalyses the reaction Ca(2+)(in) = Ca(2+)(out). Mechanosensitive cation channel with low conductance and high activation threshold. In contrast to TMEM63B, does not show phospholipid scramblase activity. Acts as a regulator of lysosomal morphology by mediating lysosomal mechanosensitivity. Important for the baby's first breath and respiration throughout life. Upon lung inflation conducts cation currents in alveolar type 1 and 2 cells triggering lamellar body exocytosis and surfactant secretion into airspace. Also acts as an osmosensitive cation channel preferentially activated by hypotonic stress. In Mus musculus (Mouse), this protein is Mechanosensitive cation channel TMEM63A.